The following is a 640-amino-acid chain: Autophagy-related protein 20 (640 aa).

Polar residues-rich tracts occupy residues 1–18 (MSDL…SETR) and 126–153 (AETC…PSVS). 2 disordered regions span residues 1 to 63 (MSDL…NNKV) and 126 to 156 (AETC…SNRK). Ser-2 is subject to N-acetylserine. Residues 140-301 (MNGETSASEE…DFLDPNNHNW (162 aa)) enclose the PX domain. Residues Arg-192, Ser-194, Lys-218, and Arg-267 each contribute to the a 1,2-diacyl-sn-glycero-3-phospho-(1D-myo-inositol-3-phosphate) site. Phosphoserine is present on residues Ser-361 and Ser-363. 2 coiled-coil regions span residues 475 to 512 (LQNE…DNEM) and 562 to 593 (TASI…KVIK).

It belongs to the sorting nexin family. Forms a complex with SNX4 and ATG17.

It is found in the endosome membrane. The protein localises to the preautophagosomal structure membrane. Functionally, required for cytoplasm to vacuole transport (Cvt), pexophagy and mitophagy. Also involved in endoplasmic reticulum-specific autophagic process and is essential for the survival of cells subjected to severe ER stress. Functions in protein retrieval from the endocytic pathway. Required for proper sorting of the v-SNARE protein SNC1. In Saccharomyces cerevisiae (strain ATCC 204508 / S288c) (Baker's yeast), this protein is Autophagy-related protein 20 (ATG20).